Here is a 614-residue protein sequence, read N- to C-terminus: NEDD8 ultimate buster 1 (614 aa).

Coiled coils occupy residues 36 to 71 (LAVK…IERG) and 151 to 206 (NVKA…MVVD). UBA domains follow at residues 373–413 (YIDP…ISNR), 423–469 (EEKE…LLSN), and 488–528 (SPSQ…LAHH). Positions 413–430 (RREELAQIRKEEKEKRRR) match the Nuclear localization signal motif. Residues 426-473 (EKRRRRLENVNTLRGMGYSTQAAKQALHQARGNLDDALKVLLSNPHMW) form an NEDD8-binding 1 region. Positions 531–590 (SLPPDLQFSGEDSSPTPSTSPSDSAGTSSASTDEDMETEAVNEILEDIPEHEEDYLDSTL) are disordered. Low complexity predominate over residues 539–561 (SGEDSSPTPSTSPSDSAGTSSAS). The tract at residues 549–597 (TSPSDSAGTSSASTDEDMETEAVNEILEDIPEHEEDYLDSTLEDEEVII) is NEDD8-binding 2. Residues 562–590 (TDEDMETEAVNEILEDIPEHEEDYLDSTL) show a composition bias toward acidic residues.

In terms of assembly, directly interacts with NEDD8 and PSMD4/S5a, a member of the regulatory subunit of the 26S proteasome. Interacts with AIPL1. The interaction with UBD via UBA domains facilitates the linking of UBD-conjugated target protein to the proteasome complex and accelerates UBD degradation and that of its conjugates.

The protein resides in the nucleus. Its function is as follows. Specific down-regulator of the NEDD8 conjugation system. Recruits NEDD8, UBD, and their conjugates to the proteasome for degradation. The polypeptide is NEDD8 ultimate buster 1 (Nub1) (Mus musculus (Mouse)).